The following is a 328-amino-acid chain: MPLHNLTRFPRLEFIGAPTPLEYLPRFSDYLGREIFIKRDDVTPMAMGGNKLRKLEFLAADALREGADTLITAGAIQSNHVRQTAAVAAKLGLHCVALLENPIGTTAENYLTNGNRLLLDLFNTQIEMCDALTDPNAQLEELATRVEAQGFRPYVIPVGGSNALGALGYVESALEIAQQCEGAVNISSVVVASGSAGTHAGLAVGLEHLMPESELIGVTVSRSVADQLPKVVNLQQAIAKELELTASAEILLWDDYFAPGYGVPNDEGMEAVKLLARLEGILLDPVYTGKAMAGLIDGISQKRFKDEGPILFIHTGGAPALFAYHPHV.

The residue at position 51 (K51) is an N6-(pyridoxal phosphate)lysine.

It belongs to the ACC deaminase/D-cysteine desulfhydrase family. As to quaternary structure, homodimer. It depends on pyridoxal 5'-phosphate as a cofactor.

It catalyses the reaction D-cysteine + H2O = hydrogen sulfide + pyruvate + NH4(+) + H(+). In terms of biological role, catalyzes the alpha,beta-elimination reaction of D-cysteine and of several D-cysteine derivatives. It could be a defense mechanism against D-cysteine. The chain is D-cysteine desulfhydrase from Escherichia coli (strain SMS-3-5 / SECEC).